Here is a 576-residue protein sequence, read N- to C-terminus: Arginine--tRNA ligase (576 aa).

The 'HIGH' region signature appears at 122–132; the sequence is PNVAKQMHVGH.

It belongs to the class-I aminoacyl-tRNA synthetase family. Monomer.

It localises to the cytoplasm. It carries out the reaction tRNA(Arg) + L-arginine + ATP = L-arginyl-tRNA(Arg) + AMP + diphosphate. The protein is Arginine--tRNA ligase of Yersinia enterocolitica serotype O:8 / biotype 1B (strain NCTC 13174 / 8081).